The following is a 315-amino-acid chain: MGSGSGWKGRDVISILDFDRDSLEQLFEVADKFSSLLRERGRIPLLEGYIVALAFFEPSTRTRLSFETAAKRLGADTIGFTSEEAISIAKGETLADTIRMLDSYADMIVLRHRYEGAALYAAEIAEHPVINAGDGKQHHPTQAMLDLYTVRKLFGTIDGLTYGVLGDLRYGRAASSFILALTIYRPRMIYLISPPLLRVRPEVRMVLDERGMRYREVESLEEVLGELDVLYVTRIQRERFPDQREYEKVRGSYRVTLELLEQHARRELRILHPLPRVDEIAPEVDGTPYAAYFEQARNGVPVRMALLALIAGREV.

Positions 61 and 62 each coordinate carbamoyl phosphate. K90 is an L-aspartate binding site. 3 residues coordinate carbamoyl phosphate: R111, H139, and Q142. 2 residues coordinate L-aspartate: R172 and R234. Residues L274 and P275 each contribute to the carbamoyl phosphate site.

It belongs to the aspartate/ornithine carbamoyltransferase superfamily. ATCase family. Heterooligomer of catalytic and regulatory chains.

It carries out the reaction carbamoyl phosphate + L-aspartate = N-carbamoyl-L-aspartate + phosphate + H(+). It participates in pyrimidine metabolism; UMP biosynthesis via de novo pathway; (S)-dihydroorotate from bicarbonate: step 2/3. Its function is as follows. Catalyzes the condensation of carbamoyl phosphate and aspartate to form carbamoyl aspartate and inorganic phosphate, the committed step in the de novo pyrimidine nucleotide biosynthesis pathway. The polypeptide is Aspartate carbamoyltransferase catalytic subunit (Hyperthermus butylicus (strain DSM 5456 / JCM 9403 / PLM1-5)).